Consider the following 307-residue polypeptide: Lipoyl synthase (307 aa).

Residues C55, C60, C66, C81, C85, C88, and S292 each coordinate [4Fe-4S] cluster. In terms of domain architecture, Radical SAM core spans 67–281 (WEDREATFLI…ARHAEELGFS (215 aa)).

It belongs to the radical SAM superfamily. Lipoyl synthase family. [4Fe-4S] cluster serves as cofactor.

It localises to the cytoplasm. It carries out the reaction [[Fe-S] cluster scaffold protein carrying a second [4Fe-4S](2+) cluster] + N(6)-octanoyl-L-lysyl-[protein] + 2 oxidized [2Fe-2S]-[ferredoxin] + 2 S-adenosyl-L-methionine + 4 H(+) = [[Fe-S] cluster scaffold protein] + N(6)-[(R)-dihydrolipoyl]-L-lysyl-[protein] + 4 Fe(3+) + 2 hydrogen sulfide + 2 5'-deoxyadenosine + 2 L-methionine + 2 reduced [2Fe-2S]-[ferredoxin]. It participates in protein modification; protein lipoylation via endogenous pathway; protein N(6)-(lipoyl)lysine from octanoyl-[acyl-carrier-protein]: step 2/2. Catalyzes the radical-mediated insertion of two sulfur atoms into the C-6 and C-8 positions of the octanoyl moiety bound to the lipoyl domains of lipoate-dependent enzymes, thereby converting the octanoylated domains into lipoylated derivatives. This Mycolicibacterium paratuberculosis (strain ATCC BAA-968 / K-10) (Mycobacterium paratuberculosis) protein is Lipoyl synthase.